The primary structure comprises 369 residues: Anhydro-N-acetylmuramic acid kinase (369 aa).

Residue 12–19 (GTSLDGVD) participates in ATP binding.

Belongs to the anhydro-N-acetylmuramic acid kinase family.

It carries out the reaction 1,6-anhydro-N-acetyl-beta-muramate + ATP + H2O = N-acetyl-D-muramate 6-phosphate + ADP + H(+). Its pathway is amino-sugar metabolism; 1,6-anhydro-N-acetylmuramate degradation. It participates in cell wall biogenesis; peptidoglycan recycling. Catalyzes the specific phosphorylation of 1,6-anhydro-N-acetylmuramic acid (anhMurNAc) with the simultaneous cleavage of the 1,6-anhydro ring, generating MurNAc-6-P. Is required for the utilization of anhMurNAc either imported from the medium or derived from its own cell wall murein, and thus plays a role in cell wall recycling. The protein is Anhydro-N-acetylmuramic acid kinase of Shigella flexneri serotype 5b (strain 8401).